A 699-amino-acid polypeptide reads, in one-letter code: tRNA 5-methylaminomethyl-2-thiouridine biosynthesis bifunctional protein MnmC (699 aa).

Residues 1–247 (MPAVSRPLPP…KREMLCGEIA (247 aa)) are tRNA (mnm(5)s(2)U34)-methyltransferase. The tract at residues 275-699 (IGAGLAGTSV…QPSPTTTETP (425 aa)) is FAD-dependent cmnm(5)s(2)U34 oxidoreductase. Residues 675-699 (RGNATLSTSSPNDDAQPSPTTTETP) are disordered.

The protein in the N-terminal section; belongs to the methyltransferase superfamily. tRNA (mnm(5)s(2)U34)-methyltransferase family. This sequence in the C-terminal section; belongs to the DAO family. Requires FAD as cofactor.

The protein resides in the cytoplasm. It catalyses the reaction 5-aminomethyl-2-thiouridine(34) in tRNA + S-adenosyl-L-methionine = 5-methylaminomethyl-2-thiouridine(34) in tRNA + S-adenosyl-L-homocysteine + H(+). Its function is as follows. Catalyzes the last two steps in the biosynthesis of 5-methylaminomethyl-2-thiouridine (mnm(5)s(2)U) at the wobble position (U34) in tRNA. Catalyzes the FAD-dependent demodification of cmnm(5)s(2)U34 to nm(5)s(2)U34, followed by the transfer of a methyl group from S-adenosyl-L-methionine to nm(5)s(2)U34, to form mnm(5)s(2)U34. The chain is tRNA 5-methylaminomethyl-2-thiouridine biosynthesis bifunctional protein MnmC from Chromohalobacter salexigens (strain ATCC BAA-138 / DSM 3043 / CIP 106854 / NCIMB 13768 / 1H11).